The sequence spans 895 residues: uncharacterized protein (895 aa).

NAD(+) is bound at residue Asn-2–Leu-19. The active site involves Cys-261. Positions Leu-468–Ile-614 constitute a DOD-type homing endonuclease domain.

This sequence belongs to the UDP-glucose/GDP-mannose dehydrogenase family. This protein undergoes a protein self splicing that involves a post-translational excision of the intervening region (intein) followed by peptide ligation.

This is an uncharacterized protein from Methanocaldococcus jannaschii (strain ATCC 43067 / DSM 2661 / JAL-1 / JCM 10045 / NBRC 100440) (Methanococcus jannaschii).